We begin with the raw amino-acid sequence, 548 residues long: T-complex protein 1 subunit theta (548 aa).

The residue at position 2 (alanine 2) is an N-acetylalanine. Serine 23 is modified (phosphoserine). The residue at position 30 (tyrosine 30) is a Phosphotyrosine. ADP-binding residues include tyrosine 47 and glycine 48. Mg(2+) is bound at residue aspartate 99. 4 residues coordinate ADP: glycine 100, threonine 101, asparagine 102, and phenylalanine 103. ATP contacts are provided by glycine 100, threonine 101, and asparagine 102. Phosphoserine is present on serine 162. ADP is bound by residues methionine 169, serine 170, and lysine 171. ATP-binding residues include serine 170 and lysine 171. Glycyl lysine isopeptide (Lys-Gly) (interchain with G-Cter in SUMO2) cross-links involve residues lysine 224, lysine 254, and lysine 260. Phosphoserine occurs at positions 269 and 317. Residues lysine 318 and lysine 400 each carry the N6-acetyllysine modification. Glycine 412 is a binding site for ADP. Glycine 412 is an ATP binding site. Lysine 459 participates in a covalent cross-link: Glycyl lysine isopeptide (Lys-Gly) (interchain with G-Cter in SUMO1). Lysine 466 is modified (N6-acetyllysine). An ADP-binding site is contributed by aspartate 499. ATP contacts are provided by aspartate 499 and lysine 504. Tyrosine 505 carries the post-translational modification Phosphotyrosine. The interval 529–548 (PAGGPKPPSGKKDWDEDQND) is disordered. Lysine 534 is covalently cross-linked (Glycyl lysine isopeptide (Lys-Gly) (interchain with G-Cter in SUMO2)). Serine 537 carries the post-translational modification Phosphoserine. Lysine 539 is covalently cross-linked (Glycyl lysine isopeptide (Lys-Gly) (interchain with G-Cter in SUMO2)).

It belongs to the TCP-1 chaperonin family. As to quaternary structure, component of the chaperonin-containing T-complex (TRiC), a hexadecamer composed of two identical back-to-back stacked rings enclosing a protein folding chamber. Each ring is made up of eight different subunits: TCP1/CCT1, CCT2, CCT3, CCT4, CCT5, CCT6A/CCT6, CCT7, CCT8. Interacts with PACRG. Interacts with DNAAF4. Interacts with synaptic plasticity regulator PANTS.

The protein resides in the cytoplasm. It localises to the cytoskeleton. Its subcellular location is the microtubule organizing center. The protein localises to the centrosome. It is found in the cilium basal body. It carries out the reaction ATP + H2O = ADP + phosphate + H(+). Component of the chaperonin-containing T-complex (TRiC), a molecular chaperone complex that assists the folding of actin, tubulin and other proteins upon ATP hydrolysis. The TRiC complex mediates the folding of WRAP53/TCAB1, thereby regulating telomere maintenance. As part of the TRiC complex may play a role in the assembly of BBSome, a complex involved in ciliogenesis regulating transports vesicles to the cilia. The polypeptide is T-complex protein 1 subunit theta (CCT8) (Bos taurus (Bovine)).